A 213-amino-acid chain; its full sequence is Probable nicotinate-nucleotide adenylyltransferase (213 aa).

The protein belongs to the NadD family.

The catalysed reaction is nicotinate beta-D-ribonucleotide + ATP + H(+) = deamido-NAD(+) + diphosphate. The protein operates within cofactor biosynthesis; NAD(+) biosynthesis; deamido-NAD(+) from nicotinate D-ribonucleotide: step 1/1. Its function is as follows. Catalyzes the reversible adenylation of nicotinate mononucleotide (NaMN) to nicotinic acid adenine dinucleotide (NaAD). This is Probable nicotinate-nucleotide adenylyltransferase from Citrobacter koseri (strain ATCC BAA-895 / CDC 4225-83 / SGSC4696).